We begin with the raw amino-acid sequence, 198 residues long: Phosphoheptose isomerase (198 aa).

An SIS domain is found at 36-198 (MIGSLLNNGK…DCLLLGVEDQ (163 aa)). 51–53 (NGG) serves as a coordination point for substrate. His60 and Glu64 together coordinate Zn(2+). Substrate-binding positions include Glu64, 93-94 (ND), 119-121 (STS), Ser124, and Gln174. Residues Gln174 and His182 each coordinate Zn(2+).

The protein belongs to the SIS family. GmhA subfamily. Homotetramer. Zn(2+) is required as a cofactor.

The protein resides in the cytoplasm. It catalyses the reaction 2 D-sedoheptulose 7-phosphate = D-glycero-alpha-D-manno-heptose 7-phosphate + D-glycero-beta-D-manno-heptose 7-phosphate. It functions in the pathway carbohydrate biosynthesis; D-glycero-D-manno-heptose 7-phosphate biosynthesis; D-glycero-alpha-D-manno-heptose 7-phosphate and D-glycero-beta-D-manno-heptose 7-phosphate from sedoheptulose 7-phosphate: step 1/1. In terms of biological role, catalyzes the isomerization of sedoheptulose 7-phosphate in D-glycero-D-manno-heptose 7-phosphate. The sequence is that of Phosphoheptose isomerase from Aromatoleum aromaticum (strain DSM 19018 / LMG 30748 / EbN1) (Azoarcus sp. (strain EbN1)).